A 332-amino-acid polypeptide reads, in one-letter code: MSTKEKLIGHVMKEEPIGSRNKVTVVGVGMVGMASAVSILLKDLCDELALVDVMEDKLKGEAMDLQHGSLFLKTHKIVADKDYSVTANSRVVVVTAGARQQEGESRLNLVQRNVNIFKFIIPNIVKYSPNCILMVVSNPVDILTYVAWKLSGFPRHRVIGSGTNLDSARFRHIMGEKLHLHPSSCHGWIVGEHGDSSVPVWSGVNVAGVSLQTLNPKMGAEGDSENWKAVHKMVVDGAYEVIKLKGYTSWAIGMSVADLVESIVKNCTKCTQCPRWSRGMHGVKDEVFLSVPCVLGNSGLTDVIHMTLKPEEEKQLVKSAETLWGVQKELTL.

NAD(+)-binding positions include 29-57 and R99; that span reads GMVG…MEDK. The substrate site is built by R106, N138, and R169. Residue N138 participates in NAD(+) binding. H193 functions as the Proton acceptor in the catalytic mechanism. Residue T248 participates in substrate binding.

Belongs to the LDH/MDH superfamily. LDH family. As to quaternary structure, homotetramer.

It localises to the cytoplasm. It carries out the reaction (S)-lactate + NAD(+) = pyruvate + NADH + H(+). The protein operates within fermentation; pyruvate fermentation to lactate; (S)-lactate from pyruvate: step 1/1. Its function is as follows. Interconverts simultaneously and stereospecifically pyruvate and lactate with concomitant interconversion of NADH and NAD(+). The sequence is that of L-lactate dehydrogenase A chain (ldha) from Sphyraena argentea (Pacific barracuda).